The primary structure comprises 302 residues: MQLRKLTTAMLVMGLSAGLAHAEDGAPAAGSTLDKIAKNGVIVVGHRESSVPFSYYDNQQKVVGYSQDYSNAIVEAVKKKLNKPDLQVKLIPITSQNRIPLLQNGTFDFECGSTTNNLERQKQAAFSDTIFVVGTRLLTKKGGDIKDFPDLKGKAVVVTSGTTSEILLHKLNEEQKMGMRIISAKDHGDSFRTLESGRAVAFMMDDALLAGERAKAKKPDNWEIVGKPQSQEAYGCMLRKNDPEFKKLMDDTIAQAQTSGEAEKWFDKWFKNPIPPKNLNMNFELSDEMKALFKAPNDKALN.

The first 22 residues, 1–22 (MQLRKLTTAMLVMGLSAGLAHA), serve as a signal peptide directing secretion.

This sequence belongs to the bacterial solute-binding protein 3 family. As to quaternary structure, the complex is composed of two ATP-binding proteins (GltL), two transmembrane proteins (GltJ and GltK) and a solute-binding protein (GltI).

It localises to the periplasm. In terms of biological role, part of the ABC transporter complex GltIJKL involved in glutamate and aspartate uptake. Binds to both glutamate and aspartate. The sequence is that of Glutamate/aspartate import solute-binding protein (gltI) from Salmonella typhimurium (strain LT2 / SGSC1412 / ATCC 700720).